Here is a 207-residue protein sequence, read N- to C-terminus: Large ribosomal subunit protein bL25 (207 aa).

The tract at residues 1 to 20 is disordered; it reads MANHQIKAQRRKDEGKGASR.

Belongs to the bacterial ribosomal protein bL25 family. CTC subfamily. Part of the 50S ribosomal subunit; part of the 5S rRNA/L5/L18/L25 subcomplex. Contacts the 5S rRNA. Binds to the 5S rRNA independently of L5 and L18.

Functionally, this is one of the proteins that binds to the 5S RNA in the ribosome where it forms part of the central protuberance. The chain is Large ribosomal subunit protein bL25 from Xylella fastidiosa (strain M23).